The sequence spans 141 residues: Large ribosomal subunit protein uL11 (141 aa).

The protein belongs to the universal ribosomal protein uL11 family. In terms of assembly, part of the ribosomal stalk of the 50S ribosomal subunit. Interacts with L10 and the large rRNA to form the base of the stalk. L10 forms an elongated spine to which L12 dimers bind in a sequential fashion forming a multimeric L10(L12)X complex. Post-translationally, one or more lysine residues are methylated.

In terms of biological role, forms part of the ribosomal stalk which helps the ribosome interact with GTP-bound translation factors. The polypeptide is Large ribosomal subunit protein uL11 (Syntrophomonas wolfei subsp. wolfei (strain DSM 2245B / Goettingen)).